The following is a 179-amino-acid chain: MTSRLQVIQGDITQLSVDAIVNAANASLMGGGGVDGAIHRAAGPALLDACKLIRQQQGECQTGHAVITPAGKLSAKAVIHTVGPVWRGGEHQEAELLEEAYRNCLLLAEANHFRSIAFPAISTGVYGYPRAQAAEIAVRTVSDFITRYALPEQVYFVCYDEETARLYARLLTQQGDDPA.

A Macro domain is found at 1-175 (MTSRLQVIQG…LYARLLTQQG (175 aa)). Substrate-binding positions include 11 to 12 (DI), asparagine 25, 33 to 35 (GVD), and 122 to 126 (STGVY). Aspartate 35 acts as the Proton acceptor in catalysis.

Belongs to the MacroD-type family. YmdB subfamily. In terms of assembly, homodimer. Interacts with RNase III.

It catalyses the reaction 3''-O-acetyl-ADP-D-ribose + H2O = ADP-D-ribose + acetate + H(+). The enzyme catalyses 2''-O-acetyl-ADP-D-ribose + H2O = ADP-D-ribose + acetate + H(+). Deacetylates O-acetyl-ADP ribose to yield ADP-ribose and free acetate. Down-regulates ribonuclease 3 (RNase III) activity. Acts by interacting directly with the region of the ribonuclease that is required for dimerization/activation. In Salmonella newport (strain SL254), this protein is O-acetyl-ADP-ribose deacetylase.